The primary structure comprises 155 residues: 6,7-dimethyl-8-ribityllumazine synthase (155 aa).

Residues Phe-22, 56 to 58 (AFE), and 80 to 82 (AVI) contribute to the 5-amino-6-(D-ribitylamino)uracil site. 85 to 86 (NT) contacts (2S)-2-hydroxy-3-oxobutyl phosphate. His-88 functions as the Proton donor in the catalytic mechanism. Phe-113 contributes to the 5-amino-6-(D-ribitylamino)uracil binding site. Arg-127 provides a ligand contact to (2S)-2-hydroxy-3-oxobutyl phosphate.

This sequence belongs to the DMRL synthase family.

The enzyme catalyses (2S)-2-hydroxy-3-oxobutyl phosphate + 5-amino-6-(D-ribitylamino)uracil = 6,7-dimethyl-8-(1-D-ribityl)lumazine + phosphate + 2 H2O + H(+). It participates in cofactor biosynthesis; riboflavin biosynthesis; riboflavin from 2-hydroxy-3-oxobutyl phosphate and 5-amino-6-(D-ribitylamino)uracil: step 1/2. Catalyzes the formation of 6,7-dimethyl-8-ribityllumazine by condensation of 5-amino-6-(D-ribitylamino)uracil with 3,4-dihydroxy-2-butanone 4-phosphate. This is the penultimate step in the biosynthesis of riboflavin. In Streptococcus pneumoniae serotype 2 (strain D39 / NCTC 7466), this protein is 6,7-dimethyl-8-ribityllumazine synthase.